We begin with the raw amino-acid sequence, 163 residues long: uncharacterized protein (163 aa).

This is an uncharacterized protein from Drosophila melanogaster (Fruit fly).